Reading from the N-terminus, the 445-residue chain is Trigger factor (445 aa).

The PPIase FKBP-type domain maps to 168–253 (GDAVIVDFVG…IHEVRAPQTP (86 aa)).

It belongs to the FKBP-type PPIase family. Tig subfamily.

The protein localises to the cytoplasm. The catalysed reaction is [protein]-peptidylproline (omega=180) = [protein]-peptidylproline (omega=0). In terms of biological role, involved in protein export. Acts as a chaperone by maintaining the newly synthesized protein in an open conformation. Functions as a peptidyl-prolyl cis-trans isomerase. The sequence is that of Trigger factor from Hyphomonas neptunium (strain ATCC 15444).